We begin with the raw amino-acid sequence, 182 residues long: Sec-independent protein translocase protein TatB (182 aa).

Residues 1 to 21 form a helical membrane-spanning segment; that stretch reads MFDIGFSELLLVFVIGLIVLG. 2 disordered regions span residues 87–107 and 121–182; these read QAAE…ASDE and TQHE…SDKP. Residues 168–182 show a composition bias toward low complexity; the sequence is AAPVVESSPSSSDKP.

This sequence belongs to the TatB family. As to quaternary structure, the Tat system comprises two distinct complexes: a TatABC complex, containing multiple copies of TatA, TatB and TatC subunits, and a separate TatA complex, containing only TatA subunits. Substrates initially bind to the TatABC complex, which probably triggers association of the separate TatA complex to form the active translocon.

Its subcellular location is the cell inner membrane. In terms of biological role, part of the twin-arginine translocation (Tat) system that transports large folded proteins containing a characteristic twin-arginine motif in their signal peptide across membranes. Together with TatC, TatB is part of a receptor directly interacting with Tat signal peptides. TatB may form an oligomeric binding site that transiently accommodates folded Tat precursor proteins before their translocation. This is Sec-independent protein translocase protein TatB from Salmonella choleraesuis (strain SC-B67).